The following is a 257-amino-acid chain: Inositol diphosphatase DSP2 (257 aa).

The region spanning 66 to 251 (NFSMVDNGIF…VSGLKHTPMS (186 aa)) is the Tyrosine-protein phosphatase domain. I168 and K172 together coordinate 1D-myo-inositol hexakisphosphate. The active-site Phosphocysteine intermediate is the C192.

Belongs to the protein-tyrosine phosphatase family. Atypical dual-specificity phosphatase Siw14-like subfamily. Expressed in roots, leaves, stems, flowers and siliques.

It catalyses the reaction 5-diphospho-1D-myo-inositol 1,2,3,4,6-pentakisphosphate + H2O = 1D-myo-inositol hexakisphosphate + phosphate + H(+). The catalysed reaction is 1,5-bis(diphospho)-1D-myo-inositol 2,3,4,6-tetrakisphosphate + H2O = 1-diphospho-1D-myo-inositol 2,3,4,5,6-pentakisphosphate + phosphate + 2 H(+). The enzyme catalyses 3,5-bis(diphospho)-1D-myo-inositol 1,2,4,6-tetrakisphosphate + H2O = 3-diphospho-1D-myo-inositol 1,2,4,5,6-pentakisphosphate + phosphate + 2 H(+). It carries out the reaction 6-diphospho-1D-myo-inositol pentakisphosphate + H2O = 1D-myo-inositol hexakisphosphate + phosphate + H(+). In terms of biological role, cleaves the beta-phosphate at the 5-position of soluble inositol pyrophosphates. Has highest activity on 5-diphosphoinositol 1,2,3,4,6-pentakisphosphate (5-InsP(7)), 1,5-bis-diphosphoinositol 2,3,4,6-tetrakisphosphate (1,5-InsP(8)) and 3,5-InsP(8). Possesses phosphotyrosine phosphatase activity in vitro. Dephosphorylates the phosphoinositides PI(3,5)P2. Hydrolyzes para-nitrophenyl phosphate and O-methylfluorescein phosphate in vitro. The chain is Inositol diphosphatase DSP2 from Arabidopsis thaliana (Mouse-ear cress).